The chain runs to 1342 residues: DNA-directed RNA polymerase subunit beta (1342 aa).

Belongs to the RNA polymerase beta chain family. The RNAP catalytic core consists of 2 alpha, 1 beta, 1 beta' and 1 omega subunit. When a sigma factor is associated with the core the holoenzyme is formed, which can initiate transcription.

The enzyme catalyses RNA(n) + a ribonucleoside 5'-triphosphate = RNA(n+1) + diphosphate. DNA-dependent RNA polymerase catalyzes the transcription of DNA into RNA using the four ribonucleoside triphosphates as substrates. The chain is DNA-directed RNA polymerase subunit beta from Salmonella choleraesuis (strain SC-B67).